The primary structure comprises 60 residues: UPF0434 protein mma_2578 (60 aa).

The protein belongs to the UPF0434 family.

In Janthinobacterium sp. (strain Marseille) (Minibacterium massiliensis), this protein is UPF0434 protein mma_2578.